A 116-amino-acid chain; its full sequence is Peptidyl-tRNA hydrolase (116 aa).

The protein belongs to the PTH2 family.

It is found in the cytoplasm. It carries out the reaction an N-acyl-L-alpha-aminoacyl-tRNA + H2O = an N-acyl-L-amino acid + a tRNA + H(+). In terms of biological role, the natural substrate for this enzyme may be peptidyl-tRNAs which drop off the ribosome during protein synthesis. The polypeptide is Peptidyl-tRNA hydrolase (Methanococcus vannielii (strain ATCC 35089 / DSM 1224 / JCM 13029 / OCM 148 / SB)).